The sequence spans 808 residues: Type VI secretion system spike protein VgrG4b (808 aa).

It belongs to the VgrG protein family.

Its subcellular location is the secreted. Part of the H2 type VI secretion system (H2-T6SS) specialized secretion system, which delivers several virulence factors in both prokaryotic and eukaryotic cells during infection. Allows the delivery of the phospholipase effector PldA to target cells where it exerts its toxicity. The polypeptide is Type VI secretion system spike protein VgrG4b (Pseudomonas aeruginosa (strain ATCC 15692 / DSM 22644 / CIP 104116 / JCM 14847 / LMG 12228 / 1C / PRS 101 / PAO1)).